Consider the following 373-residue polypeptide: Transaldolase (373 aa).

Lys-143 (schiff-base intermediate with substrate) is an active-site residue.

Belongs to the transaldolase family. Type 2 subfamily.

The protein resides in the cytoplasm. The catalysed reaction is D-sedoheptulose 7-phosphate + D-glyceraldehyde 3-phosphate = D-erythrose 4-phosphate + beta-D-fructose 6-phosphate. The protein operates within carbohydrate degradation; pentose phosphate pathway; D-glyceraldehyde 3-phosphate and beta-D-fructose 6-phosphate from D-ribose 5-phosphate and D-xylulose 5-phosphate (non-oxidative stage): step 2/3. Transaldolase is important for the balance of metabolites in the pentose-phosphate pathway. The protein is Transaldolase of Mycobacterium marinum (strain ATCC BAA-535 / M).